We begin with the raw amino-acid sequence, 126 residues long: MKFPMNNKKMTTKKRGQYGELLAADYLTAHGLNIVAKNVYSRYGEIDLIAQDDRVLVFVEVRLRRAQALVSAAESITPEKLRRCYQSAQDYLQKNYAVPPDCRFDAVLITQYQTHHEIEWLKNVIF.

It belongs to the UPF0102 family.

This Dichelobacter nodosus (strain VCS1703A) protein is UPF0102 protein DNO_0639.